A 179-amino-acid chain; its full sequence is MEKIIIDESQFMRTISRISHEIIEKHQNLNDLVIVGIKRRGAEIADLIKRKINELSGQSLPSIDLDITFYRDDLEYVEPASQSPVYSGASEFISVQNKTVILIDDVLFTGRTIRAALDALVDFGRAAKVELVIFVDRGHRELPIRADYVGKNVPTSRSEKVQVRTMKFDGCYEVALISK.

Residues 100 to 112 carry the PRPP-binding motif; that stretch reads VILIDDVLFTGRT.

This sequence belongs to the purine/pyrimidine phosphoribosyltransferase family. PyrR subfamily.

It carries out the reaction UMP + diphosphate = 5-phospho-alpha-D-ribose 1-diphosphate + uracil. In terms of biological role, regulates the transcription of the pyrimidine nucleotide (pyr) operon in response to exogenous pyrimidines. Functionally, also displays a weak uracil phosphoribosyltransferase activity which is not physiologically significant. This Mannheimia succiniciproducens (strain KCTC 0769BP / MBEL55E) protein is Bifunctional protein PyrR.